The primary structure comprises 253 residues: MYEKEAISLQTSKRILVVPGDSVQISQDVVIDPQQILYLYKKDDNTFISTITALLDFENIDDKKKLRVIPLKGRYIPREGDIVIGIVVDVTLSSWIIDINSPYLSVLNASDYLGRSFNPLTDNIRKYLEIGDVVVGKIATFDRSRGPILTVQDKGLGKVVDGSLIEIEPIKVARVIGKKKSMLNMLIEQTKCDILVGNNGRIILRCPNPELEYIAILAIKKIESEAHTTGLTERIREFIIEEKVKRGLIKYEV.

Positions Gly-80–Asp-153 constitute an S1 motif domain.

Belongs to the RRP4 family. Component of the archaeal exosome complex. Forms a trimer of Rrp4 and/or Csl4 subunits. The trimer associates with a hexameric ring-like arrangement composed of 3 Rrp41-Rrp42 heterodimers.

It is found in the cytoplasm. Non-catalytic component of the exosome, which is a complex involved in RNA degradation. Increases the RNA binding and the efficiency of RNA degradation. Confers strong poly(A) specificity to the exosome. This Ignisphaera aggregans (strain DSM 17230 / JCM 13409 / AQ1.S1) protein is Exosome complex component Rrp4.